The following is a 344-amino-acid chain: Zinc metalloproteinase nas-6 (344 aa).

The first 19 residues, 1-19 (MLDHVLLLTYCLVSTVVRS), serve as a signal peptide directing secretion. Positions 72–266 (NALKNKQLTW…VKINKLYSCK (195 aa)) constitute a Peptidase M12A domain. Intrachain disulfides connect C114/C265, C135/C154, C300/C334, C307/C327, and C314/C331. H162 contributes to the Zn(2+) binding site. The active site involves E163. 2 residues coordinate Zn(2+): H166 and H172. The ShKT domain occupies 300 to 334 (CVDHFADCPHFAQYCTRASFFFVMKSYCPFTCKHC).

Requires Zn(2+) as cofactor. Expressed in pharyngeal and body wall muscles, intestine, hypodermis and pharyngeal mc2 cells.

It is found in the secreted. Its function is as follows. Metalloprotease. The polypeptide is Zinc metalloproteinase nas-6 (nas-6) (Caenorhabditis elegans).